We begin with the raw amino-acid sequence, 241 residues long: Hybrid peroxiredoxin hyPrx5 (241 aa).

Residues 3 to 167 enclose the Thioredoxin domain; sequence SMEGKKVPQV…MLKYLAPQHQ (165 aa). Cys-49 (cysteine sulfenic acid (-SOH) intermediate; for peroxiredoxin activity) is an active-site residue. Residues 170-241 enclose the Glutaredoxin domain; the sequence is ESISIFTKPG…GSDDLEKYFA (72 aa). Cys-180 and Cys-183 are oxidised to a cystine.

The protein in the N-terminal section; belongs to the peroxiredoxin family. Prx5 subfamily. In the C-terminal section; belongs to the glutaredoxin family. In terms of assembly, homotetramer; interconnecting Prx and Grx domains of different monomers.

The catalysed reaction is a hydroperoxide + 2 glutathione = an alcohol + glutathione disulfide + H2O. Thiol-specific peroxidase that catalyzes the reduction of hydrogen peroxide and organic hydroperoxides to water and alcohols, respectively. Plays a role in cell protection against oxidative stress by detoxifying peroxides. This chain is Hybrid peroxiredoxin hyPrx5 (PGdx), found in Haemophilus influenzae (strain ATCC 51907 / DSM 11121 / KW20 / Rd).